A 101-amino-acid chain; its full sequence is Phosphoribosyl-AMP cyclohydrolase (101 aa).

Residue aspartate 71 participates in Mg(2+) binding. Cysteine 72 is a Zn(2+) binding site. Mg(2+) contacts are provided by aspartate 73 and aspartate 75. Residues cysteine 88 and cysteine 95 each contribute to the Zn(2+) site.

It belongs to the PRA-CH family. In terms of assembly, homodimer. The cofactor is Mg(2+). Zn(2+) serves as cofactor.

It is found in the cytoplasm. The enzyme catalyses 1-(5-phospho-beta-D-ribosyl)-5'-AMP + H2O = 1-(5-phospho-beta-D-ribosyl)-5-[(5-phospho-beta-D-ribosylamino)methylideneamino]imidazole-4-carboxamide. It functions in the pathway amino-acid biosynthesis; L-histidine biosynthesis; L-histidine from 5-phospho-alpha-D-ribose 1-diphosphate: step 3/9. In terms of biological role, catalyzes the hydrolysis of the adenine ring of phosphoribosyl-AMP. This chain is Phosphoribosyl-AMP cyclohydrolase, found in Bacillus cereus (strain ZK / E33L).